A 120-amino-acid polypeptide reads, in one-letter code: Methylglyoxal synthase (120 aa).

The MGS-like domain maps to 1 to 120 (MRIALIAHDN…TAEILVESVL (120 aa)). Residues His-8, Lys-12, and 54-55 (SG) contribute to the substrate site. Asp-60 (proton donor/acceptor) is an active-site residue. His-87 serves as a coordination point for substrate.

The protein belongs to the methylglyoxal synthase family.

It carries out the reaction dihydroxyacetone phosphate = methylglyoxal + phosphate. Catalyzes the formation of methylglyoxal from dihydroxyacetone phosphate. The polypeptide is Methylglyoxal synthase (Natranaerobius thermophilus (strain ATCC BAA-1301 / DSM 18059 / JW/NM-WN-LF)).